Reading from the N-terminus, the 310-residue chain is Junctional adhesion molecule C (310 aa).

The signal sequence occupies residues 1–31 (MALRRPPRLRLCARLPDFFLLLLFRGCLIGA). The Extracellular segment spans residues 32 to 241 (VNLKSSNRTP…EQEMEVYDLN (210 aa)). The 93-residue stretch at 35–127 (KSSNRTPVVQ…VARNDRKEID (93 aa)) folds into the Ig-like V-type domain. Disulfide bonds link cysteine 53–cysteine 115 and cysteine 160–cysteine 219. 2 N-linked (GlcNAc...) asparagine glycosylation sites follow: asparagine 104 and asparagine 192. Residues 139–236 (PVTPVCRVPK…SARCEEQEME (98 aa)) enclose the Ig-like C2-type domain. The chain crosses the membrane as a helical span at residues 242–262 (IGGIIGGVLVVLAVLALITLG). Over 263–310 (ICCAYRRGYFINNKQDGESYKNPGKPDGVNYIRTDEEGDFRHKSSFVI) the chain is Cytoplasmic. 2 S-palmitoyl cysteine lipidation sites follow: cysteine 264 and cysteine 265.

Belongs to the immunoglobulin superfamily. As to quaternary structure, interacts with ITGAM. Interacts with GORASP2. Proteolytically cleaved from endothelial cells surface into a soluble form by ADAM10 and ADAM17; the release of soluble JAM3 is increased by pro-inflammatory factors. In terms of processing, S-palmitoylated by ZDHHC7. S-palmitoylation promotes expression at tight junctions. Detected on round and elongated spermatids (at protein level). Highest expression in placenta, brain and kidney. Significant expression is detected on platelets. Expressed in intestinal mucosa cells. Expressed in the vascular endothelium. Found in serum (at protein level). Also detected in the synovial fluid of patients with rheumatoid arthritis, psoriatic arthritis or ostearthritis (at protein level).

It localises to the cell membrane. The protein localises to the cell junction. Its subcellular location is the desmosome. The protein resides in the tight junction. It is found in the secreted. In terms of biological role, junctional adhesion protein that mediates heterotypic cell-cell interactions with its cognate receptor JAM2 to regulate different cellular processes. Plays a role in homing and mobilization of hematopoietic stem and progenitor cells within the bone marrow. At the surface of bone marrow stromal cells, it contributes to the retention of the hematopoietic stem and progenitor cells expressing JAM3. Plays a central role in leukocytes extravasation by facilitating transmigration through the endothelium. Plays a role in spermatogenesis where JAM2 and JAM3, which are respectively expressed by Sertoli and germ cells, mediate an interaction between both cell types and play an essential role in the anchorage of germ cells onto Sertoli cells and the assembly of cell polarity complexes during spermatid differentiation. Also functions as a counter-receptor for ITGAM, mediating leukocyte-platelet interactions and is involved in the regulation of transepithelial migration of polymorphonuclear neutrophils (PMN). Plays a role in angiogenesis. Plays a role in the regulation of cell migration. During myogenesis, it is involved in myocyte fusion. Promotes chemotaxis of vascular endothelial cells and stimulates angiogenesis. The sequence is that of Junctional adhesion molecule C (JAM3) from Homo sapiens (Human).